Here is a 225-residue protein sequence, read N- to C-terminus: Techylectin-like protein (225 aa).

Residues cysteine 32–lysine 225 form the Fibrinogen C-terminal domain. A disulfide bond links cysteine 41 and cysteine 60. The Cell attachment site motif lies at arginine 75–aspartate 77. Ca(2+) contacts are provided by aspartate 164 and threonine 170. Residues cysteine 172 and cysteine 185 are joined by a disulfide bond.

In terms of tissue distribution, expressed by the venom gland.

The protein resides in the secreted. Its function is as follows. Lectin involved in innate immunity. In Phoneutria nigriventer (Brazilian armed spider), this protein is Techylectin-like protein.